The following is a 275-amino-acid chain: Phosphite transport system permease protein PtxC (275 aa).

A run of 5 helical transmembrane segments spans residues 30 to 50 (LGQVAIVFGVVLLACWYVGLL), 88 to 108 (LAMSIAGTAIAVVFSLVVAFV), 136 to 156 (LIMGIIFVAAVGFGALPGVLA), 221 to 241 (ASTVMGMVGAGGIGFELMGSL), and 249 to 269 (VAAILLVILAMVTLVDAFSGV). An ABC transmembrane type-1 domain is found at 84–267 (LIDTLAMSIA…AMVTLVDAFS (184 aa)).

Belongs to the binding-protein-dependent transport system permease family.

The protein localises to the cell inner membrane. Probably forms part of a binding-protein-dependent phosphite transporter. Probably responsible for the translocation of the substrate across the membrane. This chain is Phosphite transport system permease protein PtxC (ptxC), found in Stutzerimonas stutzeri (Pseudomonas stutzeri).